The sequence spans 585 residues: A-type ATP synthase subunit A (585 aa).

Position 231–238 (231–238 (GPFGSGKT)) interacts with ATP.

It belongs to the ATPase alpha/beta chains family. Has multiple subunits with at least A(3), B(3), C, D, E, F, H, I and proteolipid K(x).

It is found in the cell membrane. The catalysed reaction is ATP + H2O + 4 H(+)(in) = ADP + phosphate + 5 H(+)(out). Component of the A-type ATP synthase that produces ATP from ADP in the presence of a proton gradient across the membrane. The A chain is the catalytic subunit. The polypeptide is A-type ATP synthase subunit A (Desulfurococcus sp. (strain SY)).